The primary structure comprises 387 residues: 1-deoxy-D-xylulose 5-phosphate reductoisomerase (387 aa).

Threonine 11, glycine 12, serine 13, isoleucine 14, glycine 37, arginine 38, glutamine 39, and asparagine 127 together coordinate NADPH. Lysine 128 contacts 1-deoxy-D-xylulose 5-phosphate. Residue glutamate 129 coordinates NADPH. Aspartate 153 provides a ligand contact to Mn(2+). Serine 154, glutamate 155, serine 179, and histidine 200 together coordinate 1-deoxy-D-xylulose 5-phosphate. A Mn(2+)-binding site is contributed by glutamate 155. NADPH is bound at residue glycine 206. The 1-deoxy-D-xylulose 5-phosphate site is built by serine 213, asparagine 218, lysine 219, and glutamate 222. A Mn(2+)-binding site is contributed by glutamate 222.

The protein belongs to the DXR family. It depends on Mg(2+) as a cofactor. Mn(2+) serves as cofactor.

The enzyme catalyses 2-C-methyl-D-erythritol 4-phosphate + NADP(+) = 1-deoxy-D-xylulose 5-phosphate + NADPH + H(+). It functions in the pathway isoprenoid biosynthesis; isopentenyl diphosphate biosynthesis via DXP pathway; isopentenyl diphosphate from 1-deoxy-D-xylulose 5-phosphate: step 1/6. Catalyzes the NADPH-dependent rearrangement and reduction of 1-deoxy-D-xylulose-5-phosphate (DXP) to 2-C-methyl-D-erythritol 4-phosphate (MEP). The chain is 1-deoxy-D-xylulose 5-phosphate reductoisomerase from Symbiobacterium thermophilum (strain DSM 24528 / JCM 14929 / IAM 14863 / T).